The chain runs to 334 residues: Ketol-acid reductoisomerase (NADP(+)) (334 aa).

The region spanning 2–182 (PKMYYEKDTD…GGARAGVLET (181 aa)) is the KARI N-terminal Rossmann domain. NADP(+) contacts are provided by residues 25-28 (YGSQ), Ser-51, Ser-53, and 83-86 (DEKQ). His-108 is an active-site residue. Gly-134 is an NADP(+) binding site. The 146-residue stretch at 183 to 328 (TFKDETETDL…KELRGMMSWI (146 aa)) folds into the KARI C-terminal knotted domain. Asp-191, Glu-195, Glu-227, and Glu-231 together coordinate Mg(2+). Ser-252 contacts substrate.

It belongs to the ketol-acid reductoisomerase family. The cofactor is Mg(2+).

The enzyme catalyses (2R)-2,3-dihydroxy-3-methylbutanoate + NADP(+) = (2S)-2-acetolactate + NADPH + H(+). It carries out the reaction (2R,3R)-2,3-dihydroxy-3-methylpentanoate + NADP(+) = (S)-2-ethyl-2-hydroxy-3-oxobutanoate + NADPH + H(+). The protein operates within amino-acid biosynthesis; L-isoleucine biosynthesis; L-isoleucine from 2-oxobutanoate: step 2/4. It functions in the pathway amino-acid biosynthesis; L-valine biosynthesis; L-valine from pyruvate: step 2/4. In terms of biological role, involved in the biosynthesis of branched-chain amino acids (BCAA). Catalyzes an alkyl-migration followed by a ketol-acid reduction of (S)-2-acetolactate (S2AL) to yield (R)-2,3-dihydroxy-isovalerate. In the isomerase reaction, S2AL is rearranged via a Mg-dependent methyl migration to produce 3-hydroxy-3-methyl-2-ketobutyrate (HMKB). In the reductase reaction, this 2-ketoacid undergoes a metal-dependent reduction by NADPH to yield (R)-2,3-dihydroxy-isovalerate. This is Ketol-acid reductoisomerase (NADP(+)) from Clostridium beijerinckii (strain ATCC 51743 / NCIMB 8052) (Clostridium acetobutylicum).